A 418-amino-acid chain; its full sequence is Adenylosuccinate synthetase 2 (418 aa).

GTP contacts are provided by residues 12-18 (GDEGKGR) and 40-42 (GHT). Residue D13 is the Proton acceptor of the active site. 2 residues coordinate Mg(2+): D13 and G40. IMP is bound by residues 13–16 (DEGK), 38–41 (NAGH), T127, K141, T239, and R301. H41 (proton donor) is an active-site residue. 297–303 (AVTGRPR) is a binding site for substrate. GTP is bound by residues R303, 329-331 (KID), and 407-409 (SVG).

Belongs to the adenylosuccinate synthetase family. As to quaternary structure, homodimer. Mg(2+) is required as a cofactor.

It is found in the cytoplasm. It catalyses the reaction IMP + L-aspartate + GTP = N(6)-(1,2-dicarboxyethyl)-AMP + GDP + phosphate + 2 H(+). Its pathway is purine metabolism; AMP biosynthesis via de novo pathway; AMP from IMP: step 1/2. Functionally, plays an important role in the de novo pathway of purine nucleotide biosynthesis. Catalyzes the first committed step in the biosynthesis of AMP from IMP. This is Adenylosuccinate synthetase 2 from Pseudoalteromonas translucida (strain TAC 125).